The sequence spans 137 residues: Regulator of cell cycle RGCC (137 aa).

The tract at residues 57–116 is disordered; the sequence is LERMKRRSSASVSDSSGFSDSESADSVYRDSFTFSDEKLNSPTNSSPALLPSAVTPRKAK. Residues 65–82 show a composition bias toward low complexity; it reads SASVSDSSGFSDSESADS. Phosphoserine is present on residues Ser67, Ser69, Ser71, Ser75, Ser91, and Ser97. Residue Thr111 is modified to Phosphothreonine.

Interacts with CDK1 and PLK1. Interacts with SMAD3.

The protein localises to the cytoplasm. The protein resides in the nucleus. Its subcellular location is the cytoskeleton. It is found in the microtubule organizing center. It localises to the centrosome. Its function is as follows. Modulates the activity of cell cycle-specific kinases. Enhances CDK1 activity. May contribute to the regulation of the cell cycle. May inhibit growth of glioma cells by promoting arrest of mitotic progression at the G2/M transition. Fibrogenic factor contributing to the pathogenesis of renal fibrosis through fibroblast activation. The chain is Regulator of cell cycle RGCC (Rgcc) from Mus musculus (Mouse).